Consider the following 348-residue polypeptide: Sorbitol dehydrogenase (348 aa).

The Zn(2+) site is built by C40, H65, and E66. NAD(+)-binding positions include I179, D199, R204, 269 to 271 (VGI), and 293 to 295 (SFR). A substrate-binding site is contributed by R295.

This sequence belongs to the zinc-containing alcohol dehydrogenase family. As to quaternary structure, homotetramer. Zn(2+) is required as a cofactor.

The catalysed reaction is xylitol + NAD(+) = D-xylulose + NADH + H(+). It catalyses the reaction L-iditol + NAD(+) = keto-L-sorbose + NADH + H(+). It carries out the reaction keto-D-fructose + NADH + H(+) = D-sorbitol + NAD(+). Functionally, polyol dehydrogenase that catalyzes the reversible NAD(+)-dependent oxidation of various sugar alcohols. Is active with xylitol, L-iditol and D-sorbitol (D-glucitol) as substrates, leading to the C2-oxidized products D-xylulose, L-sorbose and D-fructose, respectively. Is a key enzyme in the polyol pathway that interconverts glucose and fructose via sorbitol, which constitutes an important alternate route for glucose metabolism. The polypeptide is Sorbitol dehydrogenase (SDH) (Bombyx mori (Silk moth)).